The primary structure comprises 247 residues: PABIR family member 2 (247 aa).

Residues 1–23 (MAQEKMELDLEPDTSYGGTLRRS) form a disordered region. Ala-2 carries the post-translational modification N-acetylalanine. Residues Ser-25, Ser-33, Ser-50, Ser-58, and Leu-63 each carry the phosphoserine modification. Positions 82–104 (ISQSWDESLSLSDSDFDKPEKLY) are disordered. Residues 83-94 (SQSWDESLSLSD) show a composition bias toward low complexity. Residue Thr-112 is modified to Phosphothreonine. A phosphoserine mark is found at Ser-115 and Ser-119. An Omega-N-methylarginine modification is found at Arg-122. Disordered stretches follow at residues 129–152 (VSSS…SQSP), 158–177 (PSVL…SQPK), and 202–230 (DILD…SPVA). Ser-137 and Ser-141 each carry phosphoserine. Residues 166–176 (RKGEMETESQP) are compositionally biased toward basic and acidic residues. The segment covering 202 to 216 (DILDGSSSSSGLSSD) has biased composition (low complexity).

Belongs to the FAM122 family. Post-translationally, isoform 3 and isoform 4 are phosphorylated on Ser-62 and Ser-64.

The polypeptide is PABIR family member 2 (Homo sapiens (Human)).